Reading from the N-terminus, the 213-residue chain is Histone H1.2 (213 aa).

A compositionally biased stretch (low complexity) spans 1–17 (MSETAPAAPAAAPPAEK). The interval 1–41 (MSETAPAAPAAAPPAEKAPVKKKAAKKAGGTPRKASGPPVS) is disordered. An N-acetylserine; partial modification is found at S2. S2 carries the post-translational modification Phosphoserine. At K17 the chain carries N6-acetyllysine. An N6-(2-hydroxyisobutyryl)lysine mark is found at K23, K26, and K27. K34 is modified (N6-(beta-hydroxybutyryl)lysine; alternate). An N6-crotonyllysine; alternate modification is found at K34. K34 bears the N6-methyllysine; alternate mark. The region spanning 36 to 109 (SGPPVSELIT…GASGSFKLNK (74 aa)) is the H15 domain. Position 46 is an N6-(2-hydroxyisobutyryl)lysine (K46). K52 is subject to N6-(beta-hydroxybutyryl)lysine; alternate. An N6-(2-hydroxyisobutyryl)lysine; alternate modification is found at K52. R54 carries the post-translational modification Citrulline. K63 carries the N6-(2-hydroxyisobutyryl)lysine modification. N6-(beta-hydroxybutyryl)lysine; alternate is present on K64. K64 carries the N6-crotonyllysine; alternate modification. K64 bears the N6-(2-hydroxyisobutyryl)lysine; alternate mark. An N6-(2-hydroxyisobutyryl)lysine mark is found at K75 and K81. Residues K85 and K90 each carry the N6-(beta-hydroxybutyryl)lysine; alternate modification. Residues K85, K90, and K97 each carry the N6-crotonyllysine; alternate modification. An N6-(2-hydroxyisobutyryl)lysine; alternate mark is found at K85, K90, and K97. Residues 92–213 (TLVQTKGTGA…KPKKAAPKKK (122 aa)) are disordered. K97 bears the N6-succinyllysine; alternate mark. S104 bears the Phosphoserine; by PKC mark. An N6-(beta-hydroxybutyryl)lysine modification is found at K106. K110, K117, K121, K129, and K136 each carry N6-(2-hydroxyisobutyryl)lysine. The segment covering 119–140 (KVKKAGGTKPKKPVGAAKKPKK) has biased composition (basic residues). T146 bears the Phosphothreonine mark. The residue at position 148 (K148) is an N6-(2-hydroxyisobutyryl)lysine. Residues 149–160 (KSAKKTPKKAKK) show a composition bias toward basic residues. K159 and K168 each carry N6-crotonyllysine; alternate. N6-(2-hydroxyisobutyryl)lysine; alternate occurs at positions 159 and 168. The span at 169–186 (KVAKSPKKAKVAKPKKAA) shows a compositional bias: basic residues. K187 carries the post-translational modification N6-methyllysine; by EHMT1 and EHMT2. S188 is subject to ADP-ribosylserine. Over residues 193-213 (VKPKAAKPKVVKPKKAAPKKK) the composition is skewed to basic residues. K213 is modified (N6-(2-hydroxyisobutyryl)lysine).

Belongs to the histone H1/H5 family. As to quaternary structure, interacts with TSC22D1 isoforms 2 and 5. Post-translationally, H1 histones are progressively phosphorylated during the cell cycle, becoming maximally phosphorylated during late G2 phase and M phase, and being dephosphorylated sharply thereafter. In terms of processing, crotonylation (Kcr) is specifically present in male germ cells and marks testis-specific genes in post-meiotic cells, including X-linked genes that escape sex chromosome inactivation in haploid cells. Crotonylation marks active promoters and enhancers and confers resistance to transcriptional repressors. It is also associated with post-meiotically activated genes on autosomes. Citrullination at Arg-54 (H1R54ci) by PADI4 takes place within the DNA-binding site of H1 and results in its displacement from chromatin and global chromatin decondensation, thereby promoting pluripotency and stem cell maintenance. Post-translationally, ADP-ribosylated on Ser-188 in response to DNA damage.

It is found in the nucleus. The protein resides in the chromosome. In terms of biological role, histone H1 protein binds to linker DNA between nucleosomes forming the macromolecular structure known as the chromatin fiber. Histones H1 are necessary for the condensation of nucleosome chains into higher-order structured fibers. Also acts as a regulator of individual gene transcription through chromatin remodeling, nucleosome spacing and DNA methylation. In Homo sapiens (Human), this protein is Histone H1.2.